The following is a 1197-amino-acid chain: DExH-box ATP-dependent RNA helicase DExH3 (1197 aa).

A Helicase ATP-binding domain is found at 309 to 476 (LKAIAANQVV…FGGAPAMHIP (168 aa)). 322 to 329 (GETGCGKT) is a binding site for ATP. Positions 423 to 426 (DEIH) match the DEIH box motif. The 175-residue stretch at 564–738 (LIENVLCHIV…SLCLQIKSLG (175 aa)) folds into the Helicase C-terminal domain.

Belongs to the DExH box helicase family.

The enzyme catalyses ATP + H2O = ADP + phosphate + H(+). The chain is DExH-box ATP-dependent RNA helicase DExH3 from Arabidopsis thaliana (Mouse-ear cress).